Consider the following 755-residue polypeptide: Xaa-Pro dipeptidyl-peptidase (755 aa).

Residues S348, D468, and H498 each act as charge relay system in the active site.

Belongs to the peptidase S15 family. Homodimer.

It is found in the cytoplasm. The enzyme catalyses Hydrolyzes Xaa-Pro-|- bonds to release unblocked, N-terminal dipeptides from substrates including Ala-Pro-|-p-nitroanilide and (sequentially) Tyr-Pro-|-Phe-Pro-|-Gly-Pro-|-Ile.. Removes N-terminal dipeptides sequentially from polypeptides having unsubstituted N-termini provided that the penultimate residue is proline. The chain is Xaa-Pro dipeptidyl-peptidase from Streptococcus thermophilus (strain CNRZ 1066).